The chain runs to 362 residues: MSKSNSIFPVLFCAAGIYASFLTWALVQEPLTTQVWENSHKRFQCPNVIAVVQAVAAVCVGYFYMRAKGAQRNYGAIAMVRDYAKPLALISFTQSASSPLSQYALQYVDYLTYMLAKSCKMIPVLLVHLIIYRTTISRKKSVVAVLVSIGVTIFTIGGSKGKISGSISGSNDEHFFQKASGFLLLFLSLFMDGLTNATQDKMLKNNRVQMAIQNAETQDKKQQHKVFHTLTGAHMMFALNFFVAIWNIAYLLVIDRGQICNAHAMLKKDPIIVSYLLAYALCGSLGQCFIFYTLELYGSLVLIMITVTRKMMSMLLSIIVFGKTVNATQWLGIVIVFSGITWEALDKRREKKALEAKVQKSE.

The next 5 helical transmembrane spans lie at 7–27 (IFPV…WALV), 45–65 (CPNV…YFYM), 111–131 (LTYM…HLII), 141–161 (SVVA…GSKG), and 175–195 (FFQK…DGLT). Residue N196 is glycosylated (N-linked (GlcNAc...) asparagine). 4 helical membrane-spanning segments follow: residues 234-254 (HMMF…LLVI), 271-291 (IIVS…CFIF), 296-316 (LYGS…SMLL), and 317-337 (SIIV…VIVF).

Belongs to the nucleotide-sugar transporter family. SLC35B subfamily.

It localises to the endoplasmic reticulum membrane. In terms of biological role, may be involved in specific transport of UDP-Gal from the cytosol to the Golgi lumen. Involved in the maintenance of optimal conditions for the folding of secretory pathway proteins in the endoplasmic reticulum. This is UDP-galactose transporter homolog 1 (HUT1) from Candida glabrata (strain ATCC 2001 / BCRC 20586 / JCM 3761 / NBRC 0622 / NRRL Y-65 / CBS 138) (Yeast).